Here is a 917-residue protein sequence, read N- to C-terminus: MSIATPASSDLLRRTFLEFFAQRGHEIVPSAPLVPQNDPTLMFVNAGMVQFKDVFTGKDRRPYQRAASSQKCIRISGKHNDLENVGVTARHQTFFEMLGNFSFGDYFKEDAIAFAWELLTKVYDISPSRLVVTIYNGEGGFPADDEAAAIWRKVTGFGDDRILRLGLADNFWTMGDVGPCGPCSEIHFFHGKEPDVARFGEEPRIDGTGWTEIWNNVFMQYERAEKDGPLVPLPAPSIDTGMGLERLASVLQGVTSNYDTDLLRGLVDKAAELSGKPYSGGSADDDVSMRVIADHARTAAFLIAEGVMPEKQRREYVLRRVMRRAIRHGHRLGIDRPFLHEVALEVVRRMGETYPELRDRRELIARVTEDEEVRFRSTLKRGMKILDERFDEMRSSGERTLPAAAAADLYTTYGFPLDLTQVISAESNFDVDVQGAEAIIKGAGEADGPIDPTAAVDPAHREARAKLAQPVVFTGYEHEEGDSEIVAIVRVEIQGEGDRARKVRALVERAEAGAAVEIVVRETPFYAESGGQVGDVGEVTADGARVEVKDTQKPLAGLVVHEGVVHEGALAVGQRVHLAVDHAARSATRRNHSATHVLHWALRKVLGEHAQQKGSRVGPDVLRFDFTHNRPLTREEISRIEDLVNEKVLTNAKVTTEILAMDEARRRGAMAIFEEKYGDTVRMLTMTPEVVELCGGTHACALGDIGLFKITSEGGVAAGVRRILASTGLNALAYARGVEAELARARQVAKAQGGDLAEKIGKIVAHERELEKKVAELERRILEGAGPAQGGGGGGIDAMLDGARDIGGIKVLARRVPDGTNPGALRDLAEKLRDKLGDRSAVLLGAAVGDKAQLAVMLSKSATERLKAGELIKPIARIVGGSGGGRPDMAQAGGTDVAQLDAAIAALYTEVERALAS.

Histidine 592, histidine 596, cysteine 694, and histidine 698 together coordinate Zn(2+).

The protein belongs to the class-II aminoacyl-tRNA synthetase family. Zn(2+) serves as cofactor.

It is found in the cytoplasm. The enzyme catalyses tRNA(Ala) + L-alanine + ATP = L-alanyl-tRNA(Ala) + AMP + diphosphate. Catalyzes the attachment of alanine to tRNA(Ala) in a two-step reaction: alanine is first activated by ATP to form Ala-AMP and then transferred to the acceptor end of tRNA(Ala). Also edits incorrectly charged Ser-tRNA(Ala) and Gly-tRNA(Ala) via its editing domain. In Sorangium cellulosum (strain So ce56) (Polyangium cellulosum (strain So ce56)), this protein is Alanine--tRNA ligase.